The chain runs to 314 residues: Methionyl-tRNA formyltransferase (314 aa).

113–116 provides a ligand contact to (6S)-5,6,7,8-tetrahydrofolate; it reads SILP.

It belongs to the Fmt family.

It catalyses the reaction L-methionyl-tRNA(fMet) + (6R)-10-formyltetrahydrofolate = N-formyl-L-methionyl-tRNA(fMet) + (6S)-5,6,7,8-tetrahydrofolate + H(+). In terms of biological role, attaches a formyl group to the free amino group of methionyl-tRNA(fMet). The formyl group appears to play a dual role in the initiator identity of N-formylmethionyl-tRNA by promoting its recognition by IF2 and preventing the misappropriation of this tRNA by the elongation apparatus. This is Methionyl-tRNA formyltransferase from Photobacterium profundum (strain SS9).